Reading from the N-terminus, the 315-residue chain is Glutathione synthetase (315 aa).

Residues 125-310 (KLYTAWFADL…ITGMLMDAIE (186 aa)) form the ATP-grasp domain. 151-207 (WEKHGDIIMKPLDGMGGASIFRVKEGDPNIGVIAETLTELGNRYCMAQNYLPAIKDG) contributes to the ATP binding site. 2 residues coordinate Mg(2+): Glu281 and Asn283.

It belongs to the prokaryotic GSH synthase family. The cofactor is Mg(2+). Mn(2+) serves as cofactor.

The enzyme catalyses gamma-L-glutamyl-L-cysteine + glycine + ATP = glutathione + ADP + phosphate + H(+). The protein operates within sulfur metabolism; glutathione biosynthesis; glutathione from L-cysteine and L-glutamate: step 2/2. In Salmonella typhimurium (strain LT2 / SGSC1412 / ATCC 700720), this protein is Glutathione synthetase.